The sequence spans 141 residues: 3-hydroxyacyl-[acyl-carrier-protein] dehydratase FabZ (141 aa).

Histidine 48 is an active-site residue.

Belongs to the thioester dehydratase family. FabZ subfamily.

Its subcellular location is the cytoplasm. The enzyme catalyses a (3R)-hydroxyacyl-[ACP] = a (2E)-enoyl-[ACP] + H2O. Functionally, involved in unsaturated fatty acids biosynthesis. Catalyzes the dehydration of short chain beta-hydroxyacyl-ACPs and long chain saturated and unsaturated beta-hydroxyacyl-ACPs. The protein is 3-hydroxyacyl-[acyl-carrier-protein] dehydratase FabZ of Bacillus velezensis (strain DSM 23117 / BGSC 10A6 / LMG 26770 / FZB42) (Bacillus amyloliquefaciens subsp. plantarum).